A 387-amino-acid polypeptide reads, in one-letter code: Phosphoglycerate kinase (387 aa).

Residues 21 to 23 (DLN), R36, 59 to 62 (HLGR), R113, and R146 each bind substrate. Residues K197, E314, and 340 to 343 (GGDT) contribute to the ATP site.

Belongs to the phosphoglycerate kinase family. As to quaternary structure, monomer.

The protein resides in the cytoplasm. The enzyme catalyses (2R)-3-phosphoglycerate + ATP = (2R)-3-phospho-glyceroyl phosphate + ADP. The protein operates within carbohydrate degradation; glycolysis; pyruvate from D-glyceraldehyde 3-phosphate: step 2/5. The polypeptide is Phosphoglycerate kinase (Pectobacterium atrosepticum (strain SCRI 1043 / ATCC BAA-672) (Erwinia carotovora subsp. atroseptica)).